Consider the following 377-residue polypeptide: Protein MULTIPOLAR SPINDLE 1 (377 aa).

The Nuclear localization signal motif lies at 117–124 (LRRRFLRL).

As to expression, expressed in roots, stems, leaves, inflorescences and seedlings. Strongly expressed in meiocytes.

Its subcellular location is the nucleus. The protein resides in the cytoplasm. The protein localises to the cytoskeleton. It is found in the spindle. Involved in meiotic spindle organization in meiocytes thus regulating chromosome segregation. Required for formation of meiotic DNA double-strand breaks (DSBs) during early recombination processes. The polypeptide is Protein MULTIPOLAR SPINDLE 1 (Arabidopsis thaliana (Mouse-ear cress)).